Here is a 310-residue protein sequence, read N- to C-terminus: tRNA-cytidine(32) 2-sulfurtransferase (310 aa).

Residues 48–53 (SGGKDS) carry the PP-loop motif motif. [4Fe-4S] cluster contacts are provided by cysteine 123, cysteine 126, and cysteine 214.

The protein belongs to the TtcA family. As to quaternary structure, homodimer. Requires Mg(2+) as cofactor. It depends on [4Fe-4S] cluster as a cofactor.

It is found in the cytoplasm. It catalyses the reaction cytidine(32) in tRNA + S-sulfanyl-L-cysteinyl-[cysteine desulfurase] + AH2 + ATP = 2-thiocytidine(32) in tRNA + L-cysteinyl-[cysteine desulfurase] + A + AMP + diphosphate + H(+). It participates in tRNA modification. Its function is as follows. Catalyzes the ATP-dependent 2-thiolation of cytidine in position 32 of tRNA, to form 2-thiocytidine (s(2)C32). The sulfur atoms are provided by the cysteine/cysteine desulfurase (IscS) system. This chain is tRNA-cytidine(32) 2-sulfurtransferase, found in Vibrio vulnificus (strain YJ016).